The chain runs to 392 residues: MIGTPLKKSATRVMLLGSGELGKEVVLEAQRLGVEVIAVDRYADAPAMQVAHRAHVVNMLDRVELGRIVARERPHLIVPEIEAIDTPYLLELEQEGYTVIPTARAANLTMNREGIRRLAAEELGLPTAAYRFAASIESFRAAVKDIGLPCVVKPIMSSSGKGQSVVKSMEEIDGAWTYAMEGGRGASDTVIVEEFIPFDYEITLLTVRHAGGTTFCPPIGHVQIKGDYHESWQPMAMTPAALAESQRQAKAVTDALGGSGIFGVELFIKGDRVWFSEVSPRPHDTGMVTMISQNLSEFELHVRAILGLPVPEVANLAPAASHVVLASEAAEEVTFSGLDAALSVPETKLRLFGKPDTRPGRRMGVALSFGADTDEARNRAEQAAHAVKIVTL.

N(1)-(5-phospho-beta-D-ribosyl)glycinamide-binding positions include 20–21 (EL) and Glu80. ATP-binding positions include Arg112, Lys153, 158–163 (SSGKGQ), 193–196 (EEFI), and Glu201. The ATP-grasp domain maps to 117-306 (RLAAEELGLP…EFELHVRAIL (190 aa)). Residues Glu265 and Glu277 each coordinate Mg(2+). N(1)-(5-phospho-beta-D-ribosyl)glycinamide is bound by residues Asp284, Lys354, and 361 to 362 (RR).

Belongs to the PurK/PurT family. As to quaternary structure, homodimer.

The catalysed reaction is N(1)-(5-phospho-beta-D-ribosyl)glycinamide + formate + ATP = N(2)-formyl-N(1)-(5-phospho-beta-D-ribosyl)glycinamide + ADP + phosphate + H(+). It functions in the pathway purine metabolism; IMP biosynthesis via de novo pathway; N(2)-formyl-N(1)-(5-phospho-D-ribosyl)glycinamide from N(1)-(5-phospho-D-ribosyl)glycinamide (formate route): step 1/1. Functionally, involved in the de novo purine biosynthesis. Catalyzes the transfer of formate to 5-phospho-ribosyl-glycinamide (GAR), producing 5-phospho-ribosyl-N-formylglycinamide (FGAR). Formate is provided by PurU via hydrolysis of 10-formyl-tetrahydrofolate. The protein is Formate-dependent phosphoribosylglycinamide formyltransferase of Geobacter metallireducens (strain ATCC 53774 / DSM 7210 / GS-15).